The primary structure comprises 469 residues: Origin recognition complex subunit 6 (469 aa).

Low complexity-rich tracts occupy residues Ser218 to Lys234 and Ala275 to Thr308. Disordered stretches follow at residues Ser218–Ser241, Ala275–Asn309, Glu356–Leu423, and Lys436–Lys469. 2 stretches are compositionally biased toward basic and acidic residues: residues Ser380–Leu390 and Gln409–Leu423. The span at Thr454–Lys469 shows a compositional bias: polar residues.

Belongs to the ORC6 family. In terms of assembly, ORC is composed of six subunits.

It localises to the nucleus. Its function is as follows. Component of the origin recognition complex (ORC) that binds origins of replication. DNA-binding is ATP-dependent, however specific DNA sequences that define origins of replication have not been identified so far. ORC is required to assemble the pre-replication complex necessary to initiate DNA replication. The polypeptide is Origin recognition complex subunit 6 (orcF) (Dictyostelium discoideum (Social amoeba)).